We begin with the raw amino-acid sequence, 174 residues long: Probasin (174 aa).

Positions 1 to 18 (MMRVIILLLTLHVLGVSS) are cleaved as a signal peptide. Residues cysteine 77 and cysteine 168 are joined by a disulfide bond.

It belongs to the calycin superfamily. Lipocalin family.

Its subcellular location is the secreted. The sequence is that of Probasin (Pbsn) from Mus musculus (Mouse).